Reading from the N-terminus, the 480-residue chain is Dimethyl-sulfide monooxygenase (480 aa).

FMN contacts are provided by Asp-58, Thr-104, His-154, Tyr-158, and Ser-230. Residues Gln-423–Glu-480 form a disordered region.

It belongs to the NtaA/SnaA/DszA monooxygenase family. As to quaternary structure, heterodimer of 2 subunits, DmoA and DmoB. Requires FMN as cofactor.

It catalyses the reaction dimethyl sulfide + NADH + O2 + H(+) = methanethiol + formaldehyde + NAD(+) + H2O. Inhibited by umbelliferone, 8-anilinonaphthalenesulfonate, a range of metal-chelating agents, and Hg(2+), Cd(2+) and Pb(2+) ions. Functionally, monooxygenase that mediates oxidation of dimethyl sulfide, the first step in dimethyl sulfide degradation pathway. Has much lower activity with diethyl sulfide and other short-chain alkyl methyl sulfides. In Hyphomicrobium sulfonivorans, this protein is Dimethyl-sulfide monooxygenase (dmoA).